The sequence spans 29 residues: Dermaseptin-J9 (29 aa).

As to expression, expressed by the skin glands.

The protein localises to the secreted. Functionally, has antimicrobial activity. This is Dermaseptin-J9 from Phasmahyla jandaia (Jandaia leaf frog).